Reading from the N-terminus, the 1020-residue chain is Calcium-transporting ATPase sarcoplasmic/endoplasmic reticulum type (1020 aa).

Topologically, residues 1 to 48 (MEDGHSKTVEQSLNFFGTDPERGLTLDQIKANQKKYGPNELPTEEGKS) are cytoplasmic. A helical transmembrane segment spans residues 49–69 (IWQLVLEQFDDLLVKILLLAA). Topologically, residues 70–89 (IISFVLALFEEHEETFTAFV) are lumenal. A helical transmembrane segment spans residues 90 to 110 (EPLVILLILIANAVVGVWQER). The Cytoplasmic segment spans residues 111 to 253 (NAESAIEALK…EIKTPLQQKL (143 aa)). The residue at position 240 (Ser-240) is a Phosphoserine. A helical transmembrane segment spans residues 254–273 (DEFGEQLSKVISVICVAVWA). The Lumenal portion of the chain corresponds to 274–295 (INIGHFNDPAHGGSWIKGAIYY). Residues 296–313 (FKIAVALAVAAIPEGLPA) form a helical membrane-spanning segment. The Ca(2+) site is built by Val-304, Ala-305, Ile-307, and Glu-309. At 314-757 (VITTCLALGT…EEGRAIYNNM (444 aa)) the chain is on the cytoplasmic side. The active-site 4-aspartylphosphate intermediate is Asp-351. 2 residues coordinate Mg(2+): Asp-703 and Asp-707. Residues 758–777 (KQFIRYLISSNIGEVVSIFL) form a helical membrane-spanning segment. Residues Asn-768 and Glu-771 each coordinate Ca(2+). Over 778–787 (TAALGLPEAL) the chain is Lumenal. Residues 788–808 (IPVQLLWVNLVTDGLPATALG) form a helical membrane-spanning segment. The Ca(2+) site is built by Asn-796, Thr-799, and Asp-800. The Cytoplasmic segment spans residues 809–828 (FNPPDLDIMEKPPRKADEGL). Residues 829 to 851 (ISGWLFFRYMAIGFYVGAATVGA) traverse the membrane as a helical segment. Residues 852-897 (AAWWFVFSDEGPKLSYWQLTHHLSCLGGGDEFKGVDCKIFSDPHAM) lie on the Lumenal side of the membrane. A helical membrane pass occupies residues 898–917 (TMALSVLVTIEMLNAMNSLS). Glu-908 serves as a coordination point for Ca(2+). At 918 to 930 (ENQSLITMPPWCN) the chain is on the cytoplasmic side. The helical transmembrane segment at 931-949 (LWLIGSMALSFTLHFVILY) threads the bilayer. Over 950 to 964 (VDVLSTVFQVTPLSA) the chain is Lumenal. Residues 965 to 985 (EEWITVMKFSIPVVLLDETLK) form a helical membrane-spanning segment. Topologically, residues 986–1020 (FVARKIADGESPIYKMHGIVLMWAVFFGLLYAMML) are cytoplasmic.

The protein belongs to the cation transport ATPase (P-type) (TC 3.A.3) family. In terms of assembly, interacts with SclA and SclB.

The protein resides in the endoplasmic reticulum membrane. It is found in the sarcoplasmic reticulum membrane. It carries out the reaction Ca(2+)(in) + ATP + H2O = Ca(2+)(out) + ADP + phosphate + H(+). This magnesium-dependent enzyme catalyzes the hydrolysis of ATP coupled with the transport of calcium. This chain is Calcium-transporting ATPase sarcoplasmic/endoplasmic reticulum type, found in Drosophila melanogaster (Fruit fly).